We begin with the raw amino-acid sequence, 552 residues long: Probable protein kinase UbiB (552 aa).

The 384-residue stretch at 121–504 folds into the Protein kinase domain; the sequence is HFDTVPLASA…QGLQRRVVNA (384 aa). Residues 127–135 and lysine 149 contribute to the ATP site; that span reads LASASISQV. Aspartate 284 (proton acceptor) is an active-site residue. 2 helical membrane passes run 501-521 and 530-550; these read VVNA…YGLH and IPVW…SAWW.

Belongs to the ABC1 family. UbiB subfamily.

It is found in the cell inner membrane. The protein operates within cofactor biosynthesis; ubiquinone biosynthesis [regulation]. Its function is as follows. Is probably a protein kinase regulator of UbiI activity which is involved in aerobic coenzyme Q (ubiquinone) biosynthesis. This is Probable protein kinase UbiB from Xylella fastidiosa (strain M23).